A 138-amino-acid chain; its full sequence is uncharacterized protein (138 aa).

The protein to phage 186 CP81.

This is an uncharacterized protein from Salmonella typhimurium (strain LT2 / SGSC1412 / ATCC 700720).